The sequence spans 166 residues: Endoribonuclease YbeY (166 aa).

Histidine 130, histidine 134, and histidine 140 together coordinate Zn(2+).

The protein belongs to the endoribonuclease YbeY family. The cofactor is Zn(2+).

Its subcellular location is the cytoplasm. Its function is as follows. Single strand-specific metallo-endoribonuclease involved in late-stage 70S ribosome quality control and in maturation of the 3' terminus of the 16S rRNA. The protein is Endoribonuclease YbeY of Streptococcus uberis (strain ATCC BAA-854 / 0140J).